Here is a 216-residue protein sequence, read N- to C-terminus: Nucleoside triphosphate pyrophosphatase (216 aa).

The active-site Proton acceptor is the Asp-86.

It belongs to the Maf family. The cofactor is a divalent metal cation.

Its subcellular location is the cytoplasm. It catalyses the reaction a ribonucleoside 5'-triphosphate + H2O = a ribonucleoside 5'-phosphate + diphosphate + H(+). It carries out the reaction a 2'-deoxyribonucleoside 5'-triphosphate + H2O = a 2'-deoxyribonucleoside 5'-phosphate + diphosphate + H(+). Functionally, nucleoside triphosphate pyrophosphatase. May have a dual role in cell division arrest and in preventing the incorporation of modified nucleotides into cellular nucleic acids. This Dictyostelium discoideum (Social amoeba) protein is Nucleoside triphosphate pyrophosphatase.